The chain runs to 273 residues: S-adenosylmethionine decarboxylase proenzyme (273 aa).

The active-site Schiff-base intermediate with substrate; via pyruvic acid is the Ser118. Ser118 is modified (pyruvic acid (Ser); by autocatalysis). The Proton acceptor; for processing activity role is filled by His123. Residue Cys146 is the Proton donor; for catalytic activity of the active site.

This sequence belongs to the prokaryotic AdoMetDC family. Type 2 subfamily. Heterooctamer of four alpha and four beta chains arranged as a tetramer of alpha/beta heterodimers. Pyruvate is required as a cofactor. Post-translationally, is synthesized initially as an inactive proenzyme. Formation of the active enzyme involves a self-maturation process in which the active site pyruvoyl group is generated from an internal serine residue via an autocatalytic post-translational modification. Two non-identical subunits are generated from the proenzyme in this reaction, and the pyruvate is formed at the N-terminus of the alpha chain, which is derived from the carboxyl end of the proenzyme. The post-translation cleavage follows an unusual pathway, termed non-hydrolytic serinolysis, in which the side chain hydroxyl group of the serine supplies its oxygen atom to form the C-terminus of the beta chain, while the remainder of the serine residue undergoes an oxidative deamination to produce ammonia and the pyruvoyl group blocking the N-terminus of the alpha chain.

It catalyses the reaction S-adenosyl-L-methionine + H(+) = S-adenosyl 3-(methylsulfanyl)propylamine + CO2. The protein operates within amine and polyamine biosynthesis; S-adenosylmethioninamine biosynthesis; S-adenosylmethioninamine from S-adenosyl-L-methionine: step 1/1. Functionally, catalyzes the decarboxylation of S-adenosylmethionine to S-adenosylmethioninamine (dcAdoMet), the propylamine donor required for the synthesis of the polyamines spermine and spermidine from the diamine putrescine. In Alkalilimnicola ehrlichii (strain ATCC BAA-1101 / DSM 17681 / MLHE-1), this protein is S-adenosylmethionine decarboxylase proenzyme.